A 246-amino-acid polypeptide reads, in one-letter code: Receptor-transporting protein 4 (246 aa).

The Cytoplasmic portion of the chain corresponds to 1-224 (MVVDFWTWEQ…EKLGPSRDPD (224 aa)). The 3CxxC-type zinc finger occupies 48–159 (RAFGWFRCSS…DTANCEACTL (112 aa)). The helical transmembrane segment at 225–245 (PLNICVFILLLVFIVVKCFTS) threads the bilayer.

Belongs to the TMEM7 family. Interacts with TASR16. Interacts with OPRD1 and OPRM1; the interaction promotes cell surface localization of the OPDR1-OPRM1 heterodimer. As to quaternary structure, (Microbial infection) Interacts with influenza A virus protein NS1; this interaction sequesters NS1 from interacting with RIG-I/DDX58 to restore antiviral signaling. Expressed in circumvallate papillae and testis.

Its subcellular location is the membrane. It is found in the cytoplasm. In terms of biological role, chaperone protein that facilitates the trafficking and functional cell surface expression of some G-protein coupled receptors (GPCRs). Promotes functional expression of the bitter taste receptor TAS2R16. Also promotes functional expression of the opioid receptor heterodimer OPRD1-OPRM1. In addition, acts as a potent IFN-inducible suppressor of pathogens including lyssavirus rabies, influenza A or yellow fever virus. Mechanistically, associates with the viral replicase, binds viral RNA, and thereby suppresses viral genome amplification that replicates at the endoplasmic reticulum. In addition, restores antiviral signaling by interacting with and sequestering influenza A virus protein NS1. The sequence is that of Receptor-transporting protein 4 (RTP4) from Homo sapiens (Human).